A 261-amino-acid polypeptide reads, in one-letter code: Carnitinyl-CoA dehydratase (261 aa).

Catalysis depends on Glu111, which acts as the Nucleophile. The Proton acceptor role is filled by Glu131.

It belongs to the enoyl-CoA hydratase/isomerase family.

It carries out the reaction (R)-carnitinyl-CoA = crotonobetainyl-CoA + H2O. Its pathway is amine and polyamine metabolism; carnitine metabolism. Functionally, catalyzes the reversible dehydration of L-carnitinyl-CoA to crotonobetainyl-CoA. This Citrobacter koseri (strain ATCC BAA-895 / CDC 4225-83 / SGSC4696) protein is Carnitinyl-CoA dehydratase.